A 620-amino-acid polypeptide reads, in one-letter code: Glutathione-regulated potassium-efflux system protein KefC (620 aa).

Topologically, residues 1–3 are periplasmic; that stretch reads MDS. Residues 4-24 form a helical membrane-spanning segment; the sequence is HTLVQALIYLGSAALIVPIAV. A topological domain (cytoplasmic) is located at residue arginine 25. Residues 26–46 traverse the membrane as a helical segment; sequence LGLGSVLGYLIAGCIIGPWGL. The Periplasmic portion of the chain corresponds to 47-53; that stretch reads RLVTDAE. Residues 54 to 74 form a helical membrane-spanning segment; that stretch reads SILHFAEIGVVLMLFIIGLEL. Topologically, residues 75–89 are cytoplasmic; the sequence is DPQRLWKLRAAVFGG. A helical membrane pass occupies residues 90–110; sequence GALQMVICGGLLGLFCMLLGL. Topologically, residues 111–113 are periplasmic; it reads RWQ. Residues 114 to 134 traverse the membrane as a helical segment; the sequence is VAELIGMTLALSSTAIAMQAM. The Cytoplasmic portion of the chain corresponds to 135–148; that stretch reads NERNLMVTQMGRSA. Residues 149-169 traverse the membrane as a helical segment; it reads FAVLLFQDIAAIPLVAMIPLL. The Periplasmic segment spans residues 170–177; the sequence is AASSASTT. A helical transmembrane segment spans residues 178-198; that stretch reads MGAFALSALKVAGALVLVVLL. Topologically, residues 199–213 are cytoplasmic; the sequence is GRYVTRPALRFVARS. Residues 214-233 traverse the membrane as a helical segment; that stretch reads GLREVFSAVALFLVFGFGLL. Over 234 to 236 the chain is Periplasmic; sequence LEE. A helical transmembrane segment spans residues 237–254; that stretch reads VGLSMAMGAFLAGVLLAS. The Cytoplasmic portion of the chain corresponds to 255–269; the sequence is SEYRHALESDIEPFK. A helical transmembrane segment spans residues 270-290; the sequence is GLLLGLFFIGVGMSIDFGTLI. Over 291–293 the chain is Periplasmic; the sequence is ENP. Residues 294-314 form a helical membrane-spanning segment; that stretch reads LRIVILLLGFLIIKIAMLWLI. Residues 315 to 326 lie on the Cytoplasmic side of the membrane; that stretch reads ARPLQVPNKQRR. A helical membrane pass occupies residues 327–347; that stretch reads WFAVLLGQGSEFAFVVFGAAQ. The Periplasmic portion of the chain corresponds to 348–358; it reads MANVLEPEWAK. Residues 359–379 form a helical membrane-spanning segment; sequence SLTLAVALSMAATPILLVILN. At 380 to 620 the chain is on the cytoplasmic side; sequence RLEQSSTEEA…ADEPETKPSS (241 aa). An RCK N-terminal domain is found at 399–518; it reads QPRVIIAGFG…AGVEKPERET (120 aa). Residues 597–620 form a disordered region; sequence GWQGTEEGKHTGNMADEPETKPSS.

It belongs to the monovalent cation:proton antiporter 2 (CPA2) transporter (TC 2.A.37) family. KefC subfamily. Homodimer. Interacts with the regulatory subunit KefF.

The protein resides in the cell inner membrane. Its function is as follows. Pore-forming subunit of a potassium efflux system that confers protection against electrophiles. Catalyzes K(+)/H(+) antiport. In Escherichia coli O157:H7, this protein is Glutathione-regulated potassium-efflux system protein KefC.